The following is a 295-amino-acid chain: Voltage-gated potassium channel (295 aa).

The Cytoplasmic segment spans residues 1 to 38 (MSVERWVFPGCSVMARFRRGLSDLGGRVRNIGDVMEHP). The helical transmembrane segment at 39-63 (LVELGVSYAALLSVIVVVVEYTMQL) threads the bilayer. The Extracellular portion of the chain corresponds to 64–67 (SGEY). The helical transmembrane segment at 68–92 (LVRLYLVDLILVIILWADYAYRAYK) threads the bilayer. The Cytoplasmic segment spans residues 93 to 96 (SGDP). An intramembrane region (helical) is located at residues 97–105 (AGYVKKTLY). Residues 106-108 (EIP) lie on the Extracellular side of the membrane. A helical; Voltage-sensor transmembrane segment spans residues 109 to 125 (ALVPAGLLALIEGHLAG). The Cytoplasmic segment spans residues 126–128 (LGL). Residues 129–145 (FRLVRLLRFLRILLIIS) form a helical; Voltage-sensor membrane-spanning segment. At 146-159 (RGSKFLSAIADAAD) the chain is on the cytoplasmic side. The chain crosses the membrane as a helical span at residues 160–184 (KIRFYHLFGAVMLTVLYGAFAIYIV). At 185-195 (EYPDPNSSIKS) the chain is on the extracellular side. Positions 196–208 (VFDALWWAVVTAT) form an intramembrane region, pore-forming. The Selectivity filter signature appears at 209–214 (TVGYGD). The Extracellular segment spans residues 209–221 (TVGYGDVVPATPI). A helical transmembrane segment spans residues 222–253 (GKVIGIAVMLTGISALTLLIGTVSNMFQKILV). The Cytoplasmic segment spans residues 254-295 (GEPEPSCSPAKLAEMVSSMSEEEFEEFVRTLKNLRRLENSMK).

Belongs to the potassium channel family.

Its subcellular location is the cell membrane. Mediates a strong voltage-dependent potassium ion permeability of excitable membranes. Assuming opened or closed conformations in response to the voltage difference across the membrane, the protein forms a potassium-selective channel through which potassium ions may pass in accordance with their electrochemical gradient. The sequence is that of Voltage-gated potassium channel from Aeropyrum pernix (strain ATCC 700893 / DSM 11879 / JCM 9820 / NBRC 100138 / K1).